Here is a 441-residue protein sequence, read N- to C-terminus: Ribosomal protein uS12 methylthiotransferase RimO (441 aa).

The MTTase N-terminal domain occupies 8 to 118; it reads PKIGFVSLGC…VLEHVHHYVP (111 aa). Positions 17, 53, 82, 150, 154, and 157 each coordinate [4Fe-4S] cluster. Positions 136–373 constitute a Radical SAM core domain; the sequence is LTPRHYAYLK…MQLQQQISAE (238 aa). The TRAM domain occupies 376–441; that stretch reads QEKVGREILV…DEYDLWGSRV (66 aa).

It belongs to the methylthiotransferase family. RimO subfamily. It depends on [4Fe-4S] cluster as a cofactor.

The protein localises to the cytoplasm. It catalyses the reaction L-aspartate(89)-[ribosomal protein uS12]-hydrogen + (sulfur carrier)-SH + AH2 + 2 S-adenosyl-L-methionine = 3-methylsulfanyl-L-aspartate(89)-[ribosomal protein uS12]-hydrogen + (sulfur carrier)-H + 5'-deoxyadenosine + L-methionine + A + S-adenosyl-L-homocysteine + 2 H(+). Its function is as follows. Catalyzes the methylthiolation of an aspartic acid residue of ribosomal protein uS12. The protein is Ribosomal protein uS12 methylthiotransferase RimO of Escherichia coli (strain SMS-3-5 / SECEC).